A 119-amino-acid polypeptide reads, in one-letter code: Putative membrane protein insertion efficiency factor (119 aa).

The disordered stretch occupies residues 82–119; sequence NALRGEKGGESAADVPSGGSVSEPPGPAAETSPNAQGA.

Belongs to the UPF0161 family.

Its subcellular location is the cell membrane. In terms of biological role, could be involved in insertion of integral membrane proteins into the membrane. The chain is Putative membrane protein insertion efficiency factor from Streptomyces griseus subsp. griseus (strain JCM 4626 / CBS 651.72 / NBRC 13350 / KCC S-0626 / ISP 5235).